The primary structure comprises 118 residues: MICOS complex subunit MIC13 (118 aa).

Over Met1–Ser7 the chain is Mitochondrial matrix. The helical transmembrane segment at Leu8–Tyr26 threads the bilayer. Residues Asp27 to Lys118 lie on the Mitochondrial intermembrane side of the membrane.

It belongs to the MICOS complex subunit Mic13 family. In terms of assembly, component of the mitochondrial contact site and cristae organizing system (MICOS) complex, composed of at least MICOS10/MIC10, CHCHD3/MIC19, CHCHD6/MIC25, APOO/MIC26, MICOS13/MIC13, APOOL/MIC27 and IMMT/MIC60. The MICOS complex associates with mitochondrial outer membrane proteins SAMM50, MTX1 and MTX2 (together described as components of the mitochondrial outer membrane sorting assembly machinery (SAM) complex) and DNAJC11, mitochondrial inner membrane protein TMEM11 and with HSPA9. The MICOS and SAM complexes together with DNAJC11 are part of a large protein complex spanning both membranes termed the mitochondrial intermembrane space bridging (MIB) complex.

It is found in the mitochondrion inner membrane. Component of the MICOS complex, a large protein complex of the mitochondrial inner membrane that plays crucial roles in the maintenance of crista junctions, inner membrane architecture, and formation of contact sites to the outer membrane. Constituent of mature MICOS complex, it is required for the formation of cristae junction (CJ) and maintenance of cristae morphology. Required for the incorporation of MICOS10/MIC10 into the MICOS complex. This chain is MICOS complex subunit MIC13, found in Sus scrofa (Pig).